We begin with the raw amino-acid sequence, 263 residues long: Probable ribosomal RNA small subunit methyltransferase A (263 aa).

Positions 12, 37, 58, 83, and 100 each coordinate S-adenosyl-L-methionine.

It belongs to the class I-like SAM-binding methyltransferase superfamily. rRNA adenine N(6)-methyltransferase family. RsmA subfamily.

It is found in the cytoplasm. Functionally, specifically dimethylates two adjacent adenosines in the loop of a conserved hairpin near the 3'-end of 16S rRNA in the 30S particle. May play a critical role in biogenesis of 30S subunits. This chain is Probable ribosomal RNA small subunit methyltransferase A, found in Methanococcus maripaludis (strain C7 / ATCC BAA-1331).